The primary structure comprises 206 residues: uncharacterized protein (206 aa).

Positions 1 to 17 (MKGKILFALFLSAGVIA) are cleaved as a signal peptide. C18 carries the N-palmitoyl cysteine lipid modification. C18 carries the S-diacylglycerol cysteine lipid modification. Residues 21–58 (ASQAAKQQEVKVAKAETKTKKKESKAEKFRKALAAQDK) are a coiled coil. The Cytochrome c domain occupies 97–201 (GDWRKGESLA…DIVAYLHDPE (105 aa)). Positions 127, 130, and 131 each coordinate heme c.

It localises to the cell membrane. This is an uncharacterized protein from Aquifex aeolicus (strain VF5).